The following is a 1208-amino-acid chain: Chromosome partition protein Smc (1208 aa).

Residue proline 32–asparagine 39 participates in ATP binding. Coiled coils occupy residues valine 170–isoleucine 205, glutamate 239–glutamine 504, and valine 694–aspartate 1054.

It belongs to the SMC family. Homodimer.

Its subcellular location is the cytoplasm. Functionally, required for chromosome condensation and partitioning. This Thauera aminoaromatica protein is Chromosome partition protein Smc.